The primary structure comprises 519 residues: uncharacterized protein (519 aa).

Over residues 477–486 (IKRERAHVTQ) the composition is skewed to basic residues. The interval 477–519 (IKRERAHVTQRNKPPPSGGDTAVAEGFEPPDGVSRLSLSRRVH) is disordered.

This is an uncharacterized protein from Mycobacterium tuberculosis (strain ATCC 25618 / H37Rv).